Here is a 517-residue protein sequence, read N- to C-terminus: 2-isopropylmalate synthase (517 aa).

In terms of domain architecture, Pyruvate carboxyltransferase spans 5 to 268; the sequence is IIIFDTTLRD…DTRINTQEIH (264 aa). Mn(2+) is bound by residues Asp14, His202, His204, and Asn238. The segment at 393–517 is regulatory domain; the sequence is SLDVITSQTI…ADLKSHKISQ (125 aa).

It belongs to the alpha-IPM synthase/homocitrate synthase family. LeuA type 1 subfamily. Homodimer. Mn(2+) serves as cofactor.

It is found in the cytoplasm. It carries out the reaction 3-methyl-2-oxobutanoate + acetyl-CoA + H2O = (2S)-2-isopropylmalate + CoA + H(+). It participates in amino-acid biosynthesis; L-leucine biosynthesis; L-leucine from 3-methyl-2-oxobutanoate: step 1/4. In terms of biological role, catalyzes the condensation of the acetyl group of acetyl-CoA with 3-methyl-2-oxobutanoate (2-ketoisovalerate) to form 3-carboxy-3-hydroxy-4-methylpentanoate (2-isopropylmalate). The chain is 2-isopropylmalate synthase from Histophilus somni (strain 2336) (Haemophilus somnus).